Reading from the N-terminus, the 108-residue chain is Small ribosomal subunit protein eS25w (108 aa).

A disordered region spans residues 1–36 (MAPKKDKVPPPSSKPAKSGGGKQKKKKWSKGKQKEK). A compositionally biased stretch (basic residues) spans 22–31 (KQKKKKWSKG).

It belongs to the eukaryotic ribosomal protein eS25 family.

In Arabidopsis thaliana (Mouse-ear cress), this protein is Small ribosomal subunit protein eS25w (RPS25E).